The chain runs to 203 residues: Auxin-induced protein 22E (203 aa).

The EAR-like (transcriptional repression) signature appears at 15 to 19; it reads LRLGL. The disordered stretch occupies residues 15–77; sequence LRLGLPGSDE…DHNEDSVQPA (63 aa). Residues 43–52 are compositionally biased toward basic and acidic residues; that stretch reads SSPELEESRC. Positions 58 to 67 are enriched in low complexity; it reads SDSSDSTTTS. Residues 107 to 199 enclose the PB1 domain; sequence GMYLKVSMAG…RIIKGSEAKG (93 aa).

The protein belongs to the Aux/IAA family. As to quaternary structure, homodimers and heterodimers.

Its subcellular location is the nucleus. Its function is as follows. Aux/IAA proteins are short-lived transcriptional factors that function as repressors of early auxin response genes at low auxin concentrations. Repression is thought to result from the interaction with auxin response factors (ARFs), proteins that bind to the auxin-responsive promoter element (AuxRE). Formation of heterodimers with ARF proteins may alter their ability to modulate early auxin response genes expression. This is Auxin-induced protein 22E (AUX22E) from Vigna radiata var. radiata (Mung bean).